Here is a 178-residue protein sequence, read N- to C-terminus: Inner membrane-spanning protein YciB (178 aa).

A run of 5 helical transmembrane segments spans residues 22 to 42 (IFWATAALIVATALAVIYSWY), 50 to 70 (MTLVTFVLVAVFGGLTIYFHN), 76 to 96 (WKVTIIYALFAGALLIGQWVM), 121 to 141 (IAWALFFIFCGLLNIYVAFWL), and 149 to 169 (FKVFGIPGLTLVFTLLSGVYI).

This sequence belongs to the YciB family.

Its subcellular location is the cell inner membrane. Plays a role in cell envelope biogenesis, maintenance of cell envelope integrity and membrane homeostasis. The chain is Inner membrane-spanning protein YciB from Cronobacter sakazakii (strain ATCC BAA-894) (Enterobacter sakazakii).